Here is a 533-residue protein sequence, read N- to C-terminus: Zinc finger protein 692 (533 aa).

Disordered stretches follow at residues 124–251 and 290–310; these read SLIP…PATL and TESL…TCDE. Residues 149–178 are compositionally biased toward basic and acidic residues; the sequence is EARRKQEAEGLECEHRERTQETRLSRRVEP. The span at 190–208 shows a compositional bias: acidic residues; sequence QVVEEEEEEEEEEEEEELL. Serine 233 carries the phosphoserine modification. Positions 290–305 are enriched in polar residues; that stretch reads TESLDSPGSQAQSAPN. 5 C2H2-type zinc fingers span residues 329-354, 360-384, 390-412, 418-440, and 449-472; these read MPCD…KYQH, FCCP…VKLH, YICE…RRIH, LQCE…RRKH, and FPCE…SKSH. At serine 471 the chain carries Phosphoserine. The tract at residues 478-533 is disordered; it reads VQESPGSLGSSPSISAPEPLQSPEGTSFSTSYDSNPAPSTSISSPGVPAPRNTEKS. The segment covering 481-492 has biased composition (low complexity); the sequence is SPGSLGSSPSIS. Residues 500 to 521 are compositionally biased toward polar residues; it reads PEGTSFSTSYDSNPAPSTSISS.

Belongs to the krueppel C2H2-type zinc-finger protein family. Post-translationally, phosphorylation at Ser-471 results in loss of DNA-binding activity.

It localises to the nucleus. Functionally, may act as an transcriptional repressor for PCK1 gene expression, in turns may participate in the hepatic gluconeogenesis regulation through the activated AMPK signaling pathway. This is Zinc finger protein 692 from Rattus norvegicus (Rat).